The sequence spans 189 residues: Threonylcarbamoyl-AMP synthase (189 aa).

The YrdC-like domain occupies 3–189; sequence TTSVTEAAEC…NALTGEVIRP (187 aa).

It belongs to the SUA5 family. TsaC subfamily.

It localises to the cytoplasm. The catalysed reaction is L-threonine + hydrogencarbonate + ATP = L-threonylcarbamoyladenylate + diphosphate + H2O. Required for the formation of a threonylcarbamoyl group on adenosine at position 37 (t(6)A37) in tRNAs that read codons beginning with adenine. Catalyzes the conversion of L-threonine, HCO(3)(-)/CO(2) and ATP to give threonylcarbamoyl-AMP (TC-AMP) as the acyladenylate intermediate, with the release of diphosphate. The sequence is that of Threonylcarbamoyl-AMP synthase from Acinetobacter baumannii (strain ACICU).